We begin with the raw amino-acid sequence, 468 residues long: BTB and MATH domain-containing protein 45 (468 aa).

One can recognise an MATH domain in the interval valine 7–valine 124. 2 BTB domains span residues serine 148–aspartate 215 and serine 304–leucine 368.

The protein is BTB and MATH domain-containing protein 45 (bath-45) of Caenorhabditis elegans.